Consider the following 235-residue polypeptide: Phosphoribosylaminoimidazole-succinocarboxamide synthase (235 aa).

The protein belongs to the SAICAR synthetase family.

It carries out the reaction 5-amino-1-(5-phospho-D-ribosyl)imidazole-4-carboxylate + L-aspartate + ATP = (2S)-2-[5-amino-1-(5-phospho-beta-D-ribosyl)imidazole-4-carboxamido]succinate + ADP + phosphate + 2 H(+). It participates in purine metabolism; IMP biosynthesis via de novo pathway; 5-amino-1-(5-phospho-D-ribosyl)imidazole-4-carboxamide from 5-amino-1-(5-phospho-D-ribosyl)imidazole-4-carboxylate: step 1/2. The chain is Phosphoribosylaminoimidazole-succinocarboxamide synthase from Nautilia profundicola (strain ATCC BAA-1463 / DSM 18972 / AmH).